We begin with the raw amino-acid sequence, 1183 residues long: 3-hydroxy-3-methylglutaryl-coenzyme A reductase (1183 aa).

The Cytoplasmic segment spans residues Met1 to Asp245. The 182-residue stretch at Asp245 to Ile426 folds into the SSD domain. Residues Ile246–Ser266 form a helical membrane-spanning segment. Residues Met267–Lys273 lie on the Lumenal side of the membrane. The helical transmembrane segment at Phe274–Val294 threads the bilayer. The Cytoplasmic segment spans residues Thr295–Gly299. A helical membrane pass occupies residues Val300–Phe320. Residues Glu321–Asp378 are Lumenal-facing. The chain crosses the membrane as a helical span at residues Tyr379 to Gln399. The Cytoplasmic portion of the chain corresponds to Gln400–Cys402. A helical membrane pass occupies residues Phe403–Ile423. Topologically, residues Leu424–Lys482 are lumenal. Residues Phe483 to Pro503 traverse the membrane as a helical segment. The Cytoplasmic segment spans residues Phe504–Arg1183. The active-site Charge relay system is Glu828. Ser834–Lys840 is a binding site for CoA. Residues Ser895–Phe897 and Asp922–Ser930 each bind NADP(+). Catalysis depends on Lys962, which acts as the Charge relay system. Residue Val991–Lys993 participates in CoA binding. Asp1038 (charge relay system) is an active-site residue. A CoA-binding site is contributed by Ala1133–His1134. The active-site Proton donor is the His1134. Positions Gln1136–Arg1183 are disordered. Asn1138 to Arg1139 lines the NADP(+) pocket. Composition is skewed to low complexity over residues Arg1139–Thr1148 and Ser1167–Ala1177.

It belongs to the HMG-CoA reductase family.

The protein localises to the endoplasmic reticulum membrane. It catalyses the reaction (R)-mevalonate + 2 NADP(+) + CoA = (3S)-3-hydroxy-3-methylglutaryl-CoA + 2 NADPH + 2 H(+). The protein operates within metabolic intermediate biosynthesis; (R)-mevalonate biosynthesis; (R)-mevalonate from acetyl-CoA: step 3/3. HMG-CoA reductase; part of the first module of ergosterol biosynthesis pathway that includes the early steps of the pathway, conserved across all eukaryotes, and which results in the formation of mevalonate from acetyl-coenzyme A (acetyl-CoA). In this module, the cytosolic acetyl-CoA acetyltransferase catalyzes the formation of acetoacetyl-CoA. The hydroxymethylglutaryl-CoA synthase then condenses acetyl-CoA with acetoacetyl-CoA to form HMG-CoA. The rate-limiting step of the early module is the reduction to mevalonate by the 3-hydroxy-3-methylglutaryl-coenzyme A (HMG-CoA) reductase HMGR. The chain is 3-hydroxy-3-methylglutaryl-coenzyme A reductase (HMGR) from Gibberella fujikuroi (strain CBS 195.34 / IMI 58289 / NRRL A-6831) (Bakanae and foot rot disease fungus).